The following is a 448-amino-acid chain: tRNA modification GTPase MnmE (448 aa).

(6S)-5-formyl-5,6,7,8-tetrahydrofolate-binding residues include R24, E81, and K120. The region spanning 216–373 (GLNVVLVGAP…LKRTLLREAG (158 aa)) is the TrmE-type G domain. Position 226 (N226) interacts with K(+). Residues 226 to 231 (NVGKSS), 245 to 251 (TDIAGTT), and 270 to 273 (DTAG) contribute to the GTP site. Position 230 (S230) interacts with Mg(2+). K(+) contacts are provided by T245, I247, and T250. T251 contributes to the Mg(2+) binding site. Position 448 (K448) interacts with (6S)-5-formyl-5,6,7,8-tetrahydrofolate.

Belongs to the TRAFAC class TrmE-Era-EngA-EngB-Septin-like GTPase superfamily. TrmE GTPase family. As to quaternary structure, homodimer. Heterotetramer of two MnmE and two MnmG subunits. It depends on K(+) as a cofactor.

It is found in the cytoplasm. Functionally, exhibits a very high intrinsic GTPase hydrolysis rate. Involved in the addition of a carboxymethylaminomethyl (cmnm) group at the wobble position (U34) of certain tRNAs, forming tRNA-cmnm(5)s(2)U34. In Neisseria meningitidis serogroup A / serotype 4A (strain DSM 15465 / Z2491), this protein is tRNA modification GTPase MnmE.